The following is a 465-amino-acid chain: Phosphatidylserine synthase 1 (465 aa).

At 1–35 (MVSAMRSRTLSKDDVNYKMHFRMINEQQVEDITID) the chain is on the cytoplasmic side. Residues 36-56 (FFYKPHTITLLTFTTVSLMYF) form a helical membrane-spanning segment. Over 57-68 (AFTRENTSQEDN) the chain is Lumenal. Residues 69-89 (IWKGILSVIFFFLIISVLAFP) traverse the membrane as a helical segment. The Cytoplasmic portion of the chain corresponds to 90–102 (NGPFTRPHPAIWR). Residues 103-123 (MVFGLSVLYFLFLVFLLFLNV) form a helical membrane-spanning segment. The Lumenal segment spans residues 124 to 186 (EQVKAVMYWL…AMKALLIRSY (63 aa)). A helical membrane pass occupies residues 187–207 (GLCWTISITWEMTELFFMHLL). Topologically, residues 208 to 216 (PNFAECWWD) are cytoplasmic. The chain crosses the membrane as a helical span at residues 217–237 (QVILDILLCNGGGILLGMVVC). At 238–286 (RFLEMRTYHWASFKDIHTTTGKIKRAVLQFTPASWIYVRWFDPKSSFQR) the chain is on the lumenal side. Residues 287–307 (VAGVYLFMIIWQLTELNTFFL) form a helical membrane-spanning segment. At 308–319 (KHIFVFQASHPL) the chain is on the cytoplasmic side. Residues 320–342 (SWCRILFIGIITAPTVRQYYAYL) traverse the membrane as a helical segment. Topologically, residues 343-355 (TDTQCKRVGTQCW) are lumenal. A helical membrane pass occupies residues 356–376 (VFGAIAFLEATVCIKFGQDLF). The Cytoplasmic segment spans residues 377–383 (SKTHLLY). Residues 384–404 (VFLWLFSVAVITFLCLYGMVW) traverse the membrane as a helical segment. The Lumenal segment spans residues 405 to 465 (YADYCGQREK…GKVTNGVGKK (61 aa)). The segment at 440 to 465 (PVKQNEGTSRRKNRHKGKVTNGVGKK) is disordered. Basic residues predominate over residues 449–465 (RRKNRHKGKVTNGVGKK).

This sequence belongs to the phosphatidyl serine synthase family.

Its subcellular location is the endoplasmic reticulum membrane. It carries out the reaction a 1,2-diacyl-sn-glycero-3-phosphoethanolamine + L-serine = a 1,2-diacyl-sn-glycero-3-phospho-L-serine + ethanolamine. The enzyme catalyses a 1,2-diacyl-sn-glycero-3-phosphocholine + L-serine = a 1,2-diacyl-sn-glycero-3-phospho-L-serine + choline. The protein operates within phospholipid metabolism; phosphatidylserine biosynthesis. Functionally, catalyzes a base-exchange reaction in which the polar head group of phosphatidylethanolamine (PE) or phosphatidylcholine (PC) is replaced by L-serine. Catalyzes mainly the conversion of phosphatidylcholine but also converts, in vitro and to a lesser extent, phosphatidylethanolamine. The protein is Phosphatidylserine synthase 1 (ptdss1) of Xenopus tropicalis (Western clawed frog).